A 920-amino-acid chain; its full sequence is 2-oxoadipate dehydrogenase complex component E1 (920 aa).

Residues 299–322 are disordered; it reads QGKTRGRQQVKQDGDYSTDPHSRP. Basic and acidic residues predominate over residues 308–322; it reads VKQDGDYSTDPHSRP.

The protein belongs to the alpha-ketoglutarate dehydrogenase family. In terms of assembly, the 2-oxoadipate dehydrogenase complex is composed of OADH (2-oxoadipate dehydrogenase; E1a), DLST (dihydrolipoamide succinyltransferase; E2) and DLD (dihydrolipoamide dehydrogenase; E3). E1a functional unit is a dimer. Requires thiamine diphosphate as cofactor.

Its subcellular location is the mitochondrion. It catalyses the reaction N(6)-[(R)-lipoyl]-L-lysyl-[protein] + 2-oxoadipate + H(+) = N(6)-[(R)-S(8)-glutaryldihydrolipoyl]-L-lysyl-[protein] + CO2. Its pathway is amino-acid degradation. Its function is as follows. 2-oxoadipate dehydrogenase (E1a) component of the 2-oxoadipate dehydrogenase complex (OADHC). Participates in the first step, rate limiting for the overall conversion of 2-oxoadipate (alpha-ketoadipate) to glutaryl-CoA and CO(2) catalyzed by the whole OADHC. Catalyzes the irreversible decarboxylation of 2-oxoadipate via the thiamine diphosphate (ThDP) cofactor and subsequent transfer of the decarboxylated acyl intermediate on an oxidized dihydrolipoyl group that is covalently amidated to the E2 enzyme (dihydrolipoyllysine-residue succinyltransferase or DLST). Can catalyze the decarboxylation of 2-oxoglutarate in vitro, but at a much lower rate than 2-oxoadipate. Responsible for the last step of L-lysine, L-hydroxylysine and L-tryptophan catabolism with the common product being 2-oxoadipate. The chain is 2-oxoadipate dehydrogenase complex component E1 (dhtkd1) from Danio rerio (Zebrafish).